Reading from the N-terminus, the 205-residue chain is N-(5'-phosphoribosyl)anthranilate isomerase (205 aa).

The protein belongs to the TrpF family.

The catalysed reaction is N-(5-phospho-beta-D-ribosyl)anthranilate = 1-(2-carboxyphenylamino)-1-deoxy-D-ribulose 5-phosphate. The protein operates within amino-acid biosynthesis; L-tryptophan biosynthesis; L-tryptophan from chorismate: step 3/5. This chain is N-(5'-phosphoribosyl)anthranilate isomerase, found in Acidithiobacillus ferrooxidans (strain ATCC 23270 / DSM 14882 / CIP 104768 / NCIMB 8455) (Ferrobacillus ferrooxidans (strain ATCC 23270)).